The primary structure comprises 259 residues: Leucine-rich repeat-containing protein 61 (259 aa).

LRR repeat units follow at residues 54–75 (NLEW…ASLR), 76–97 (QLAV…AACE), and 98–119 (NLQS…QCLA). Positions 138–178 (NPLCANASYWAVVRELLPGLKVIDGERVSGRGSELYQLCRD) constitute an LRRCT domain.

In Mus musculus (Mouse), this protein is Leucine-rich repeat-containing protein 61 (Lrrc61).